The following is a 572-amino-acid chain: Urease subunit alpha (572 aa).

One can recognise a Urease domain in the interval 131 to 572; sequence GGIDAHIHFI…LPLAQRYFLF (442 aa). 3 residues coordinate Ni(2+): His136, His138, and Lys219. Lys219 carries the N6-carboxylysine modification. His221 lines the substrate pocket. Residues His248 and His274 each contribute to the Ni(2+) site. The Proton donor role is filled by His322. Residue Asp362 coordinates Ni(2+).

It belongs to the metallo-dependent hydrolases superfamily. Urease alpha subunit family. Heterotrimer of UreA (gamma), UreB (beta) and UreC (alpha) subunits. Three heterotrimers associate to form the active enzyme. Ni cation serves as cofactor. Post-translationally, carboxylation allows a single lysine to coordinate two nickel ions.

It is found in the cytoplasm. The catalysed reaction is urea + 2 H2O + H(+) = hydrogencarbonate + 2 NH4(+). It functions in the pathway nitrogen metabolism; urea degradation; CO(2) and NH(3) from urea (urease route): step 1/1. The chain is Urease subunit alpha from Thermosynechococcus vestitus (strain NIES-2133 / IAM M-273 / BP-1).